An 879-amino-acid polypeptide reads, in one-letter code: Beta-mannosidase (879 aa).

The N-terminal stretch at 1 to 17 (MLLRLLLLLAPCGAGFA) is a signal peptide. 2 N-linked (GlcNAc...) asparagine glycosylation sites follow: asparagine 35 and asparagine 77. A disulfide bridge connects residues cysteine 167 and cysteine 176. 190–192 (WDW) serves as a coordination point for substrate. Asparagine 297 and asparagine 302 each carry an N-linked (GlcNAc...) asparagine glycan. A substrate-binding site is contributed by asparagine 456. Glutamate 457 (proton donor) is an active-site residue. Intrachain disulfides connect cysteine 540/cysteine 629, cysteine 732/cysteine 761, and cysteine 764/cysteine 769. Glutamate 554 serves as the catalytic Nucleophile. Residue asparagine 607 is glycosylated (N-linked (GlcNAc...) asparagine). Asparagine 803 is a glycosylation site (N-linked (GlcNAc...) asparagine).

Belongs to the glycosyl hydrolase 2 family. As to quaternary structure, monomer. The N-terminus is blocked. Post-translationally, N-glycosylated. As to expression, detected in kidney (at protein level). Highest expression is found in thyroid tissue. The amount of transcript is significantly higher in normal tissues than in tissues affected by the disease.

Its subcellular location is the lysosome. The enzyme catalyses Hydrolysis of terminal, non-reducing beta-D-mannose residues in beta-D-mannosides.. Its pathway is glycan metabolism; N-glycan degradation. Exoglycosidase that cleaves the single beta-linked mannose residue from the non-reducing end of all N-linked glycoprotein oligosaccharides. This is Beta-mannosidase (MANBA) from Bos taurus (Bovine).